A 150-amino-acid polypeptide reads, in one-letter code: DNA-directed RNA polymerases I, II, and III subunit RPABC3 (150 aa).

At alanine 2 the chain carries N-acetylalanine.

This sequence belongs to the eukaryotic RPB8 RNA polymerase subunit family. Component of the RNA polymerase I (Pol I), RNA polymerase II (Pol II) and RNA polymerase III (Pol III) complexes consisting of at least 13, 12 and 17 subunits, respectively. Pol I complex consists of a ten-subunit catalytic core composed of POLR1A/RPA1, POLR1B/RPA2, POLR1C/RPAC1, POLR1D/RPAC2, POLR1H/RPA12, POLR2E/RPABC1, POLR2F/RPABC2, POLR2H/RPABC3, POLR2K/RPABC4 and POLR2L/RPABC5; a mobile stalk subunit POLR1F/RPA43 protruding from the core and additional subunits homologous to general transcription factors POLR1E/RPA49 and POLR1G/RPA34. Part of Pol I pre-initiation complex (PIC), in which Pol I core assembles with RRN3 and promoter-bound UTBF and SL1/TIF-IB complex. Pol II complex contains a ten-subunit catalytic core composed of POLR2A/RPB1, POLR2B/RPB2, POLR2C/RPB3, POLR2I/RPB9, POLR2J/RPB11, POLR2E/RPABC1, POLR2F/RPABC2, POLR2H/RPABC3, POLR2K/RPABC4 and POLR2L/RPABC5 and a mobile stalk composed of two subunits POLR2D/RPB4 and POLR2G/RPB7. Part of Pol II(G) complex, in which Pol II core associates with an additional subunit POLR2M; unlike conventional Pol II, Pol II(G) functions as a transcriptional repressor. Part of Pol II pre-initiation complex (PIC), in which Pol II core assembles with Mediator, general transcription factors and other specific initiation factors including GTF2E1, GTF2E2, GTF2F1, GTF2F2, TCEA1, ERCC2, ERCC3, GTF2H2, GTF2H3, GTF2H4, GTF2H5, GTF2A1, GTF2A2, GTF2B and TBP; this large multi-subunit PIC complex mediates DNA unwinding and targets Pol II core to the transcription start site where the first phosphodiester bond forms. Directly interacts with POLR2A. Pol III complex consists of a ten-subunit catalytic core composed of POLR3A/RPC1, POLR3B/RPC2, POLR1C/RPAC1, POLR1D/RPAC2, POLR3K/RPC10, POLR2E/RPABC1, POLR2F/RPABC2, POLR2H/RPABC3, POLR2K/RPABC4 and POLR2L/RPABC5; a mobile stalk composed of two subunits POLR3H/RPC8 and CRCP/RPC9, protruding from the core and functioning primarily in transcription initiation; and additional subunits homologous to general transcription factors of the RNA polymerase II machinery, POLR3C/RPC3-POLR3F/RPC6-POLR3G/RPC7 heterotrimer required for transcription initiation and POLR3D/RPC4-POLR3E/RPC5 heterodimer involved in both transcription initiation and termination.

It is found in the nucleus. It localises to the nucleolus. Its function is as follows. DNA-dependent RNA polymerase catalyzes the transcription of DNA into RNA using the four ribonucleoside triphosphates as substrates. Common component of RNA polymerases I, II and III which synthesize ribosomal RNA precursors, mRNA precursors and many functional non-coding RNAs, and small RNAs, such as 5S rRNA and tRNAs, respectively. This Bos taurus (Bovine) protein is DNA-directed RNA polymerases I, II, and III subunit RPABC3 (POLR2H).